A 463-amino-acid polypeptide reads, in one-letter code: Argininosuccinate lyase (463 aa).

It belongs to the lyase 1 family. Argininosuccinate lyase subfamily.

The protein resides in the cytoplasm. It carries out the reaction 2-(N(omega)-L-arginino)succinate = fumarate + L-arginine. It functions in the pathway amino-acid biosynthesis; L-arginine biosynthesis; L-arginine from L-ornithine and carbamoyl phosphate: step 3/3. The polypeptide is Argininosuccinate lyase (Dinoroseobacter shibae (strain DSM 16493 / NCIMB 14021 / DFL 12)).